Consider the following 66-residue polypeptide: Large ribosomal subunit protein bL35 (66 aa).

This sequence belongs to the bacterial ribosomal protein bL35 family.

This chain is Large ribosomal subunit protein bL35, found in Wigglesworthia glossinidia brevipalpis.